The primary structure comprises 398 residues: Organelle RRM domain-containing protein 1, chloroplastic (398 aa).

Residues 1 to 88 (MDTALPSVLI…RWVVVMDTPP (88 aa)) constitute a chloroplast transit peptide. The span at 54–70 (LLASSSESPPAQLAAAS) shows a compositional bias: low complexity. The interval 54–79 (LLASSSESPPAQLAAASTESQSRSSR) is disordered. The region spanning 299–377 (KRLFVTGLSF…WMIVVDVAKT (79 aa)) is the RRM domain.

It localises to the plastid. It is found in the chloroplast. Involved in C-to-U editing of chloroplastic RNA. Functions as major chloroplastic editing factor. Controls a majority of the chloroplastic editing sites. This chain is Organelle RRM domain-containing protein 1, chloroplastic (ORRM1), found in Zea mays (Maize).